Reading from the N-terminus, the 1232-residue chain is Anoctamin-8 (1232 aa).

Residues 1-32 form a disordered region; it reads MAEAASGAGGTSLEGERGKRPPPEGEPAAPAS. Ala-2 carries the post-translational modification N-acetylalanine. At 2–244 the chain is on the extracellular side; sequence AEAASGAGGT…DDICDYFGVK (243 aa). A compositionally biased stretch (basic and acidic residues) spans 14–23; that stretch reads EGERGKRPPP. The chain crosses the membrane as a helical span at residues 245-265; it reads IAMYFAWLGFYTSAMVYPAVF. Residues 266-281 lie on the Cytoplasmic side of the membrane; sequence GSVLYTFTEADQTSRD. The helical transmembrane segment at 282 to 302 threads the bilayer; the sequence is VSCVVFALFNVIWSTLFLEEW. At 303-356 the chain is on the extracellular side; it reads KRRGAELAYKWGTLDSPGEAVEEPRPQFRGVRRISPITRAEEFYYPPWKRLLFQ. Residue Ser-318 is modified to Phosphoserine. Residues 357-377 traverse the membrane as a helical segment; the sequence is LLVSLPLCLACLVCVFLLMLG. Residues 378–400 lie on the Cytoplasmic side of the membrane; it reads CFQLQELVLSVKGLPRLARFLPK. The chain crosses the membrane as a helical span at residues 401-421; sequence VMLALLVSVSAEGYKKLAIWL. Residues 422–437 are Extracellular-facing; that stretch reads NDMENYRLESAYEKHL. A helical membrane pass occupies residues 438–458; that stretch reads IIKVVLFQFVNSYLSLFYIGF. Topologically, residues 459–750 are cytoplasmic; that stretch reads YLKDMERLKE…YEDTFQDYQE (292 aa). The tract at residues 524-650 is disordered; sequence RRLEPQADEG…SPTMVEKGLE (127 aa). Residues 532-551 are compositionally biased toward gly residues; the sequence is EGGGGGSGGGGRRCLSGGCG. Residues 582-606 are compositionally biased toward acidic residues; sequence EEDEDDEEEEDEEEEEDEEEGEEGG. Position 669 is a phosphoserine (Ser-669). A disordered region spans residues 681-728; sequence RAGGEGRDQGPDGGPDPEPGSNSDSTRRQRRQNRSSWIDPPEEEHSPQ. Residues 751–771 form a helical membrane-spanning segment; that stretch reads MFVQFGYVVLFSSAFPLAALC. The Extracellular segment spans residues 772–807; that stretch reads ALVNNLIEIRSDAFKLCTGLQRPFGQRVESIGQWQK. Position 801 is a phosphoserine; by FAM20C (Ser-801). Residues 808-828 form a helical membrane-spanning segment; the sequence is VMEAMGVLAIVVNCYLIGQCG. Topologically, residues 829–841 are cytoplasmic; the sequence is QLQRLFPWLSPEA. The helical transmembrane segment at 842–862 threads the bilayer; that stretch reads AIVSVVVLEHFALLLKYLIHV. The Extracellular portion of the chain corresponds to 863–1232; it reads AIPDIPGWVA…QAVCWPSGWH (370 aa). Disordered regions lie at residues 888–970, 997–1152, and 1174–1232; these read RHER…GSLL, LAAA…WQWD, and PPCA…SGWH. The span at 904–932 shows a compositional bias: basic and acidic residues; it reads RREEEERQRHAEHHARREHDSGGREEARA. Low complexity-rich tracts occupy residues 933–953 and 997–1006; these read EGSG…AKGS and LAAAGAGATT. Asymmetric dimethylarginine; alternate is present on Arg-1020. Arg-1020 is subject to Omega-N-methylarginine; alternate. Positions 1031 to 1043 are enriched in basic and acidic residues; sequence KSPETRRDSERSH. Residues 1078–1087 are compositionally biased toward polar residues; sequence TPSSGSSRVQ. Composition is skewed to pro residues over residues 1130–1145 and 1197–1221; these read PAPP…PTPP and LPPP…PSPS.

It belongs to the anoctamin family. As to expression, expressed in embryonic stem cells, fetal brain and neural tissues.

The protein localises to the cell membrane. Does not exhibit calcium-activated chloride channel (CaCC) activity. The protein is Anoctamin-8 (ANO8) of Homo sapiens (Human).